Consider the following 114-residue polypeptide: uncharacterized protein (114 aa).

Residues 31 to 72 (EFEKLVSEQMKTMDKLLDLQSELDRCKQIEAELRHLERDARL) are a coiled coil.

This is an uncharacterized protein from Bacillus subtilis (strain 168).